We begin with the raw amino-acid sequence, 102 residues long: Cell division topological specificity factor (102 aa).

It belongs to the MinE family.

In terms of biological role, prevents the cell division inhibition by proteins MinC and MinD at internal division sites while permitting inhibition at polar sites. This ensures cell division at the proper site by restricting the formation of a division septum at the midpoint of the long axis of the cell. This chain is Cell division topological specificity factor, found in Synechococcus sp. (strain CC9605).